Consider the following 382-residue polypeptide: S-adenosylmethionine synthase (382 aa).

Glu-10 contacts Mg(2+). His-16 contributes to the ATP binding site. Glu-44 serves as a coordination point for K(+). Residues Glu-57 and Gln-100 each contribute to the L-methionine site. ATP is bound by residues Asp-166–Lys-168, Ser-234–Phe-237, Asp-245, Arg-251–Lys-252, Ala-268, Lys-272, and Lys-276. Asp-245 contacts L-methionine. L-methionine is bound at residue Lys-276.

This sequence belongs to the AdoMet synthase family. Requires Mg(2+) as cofactor. K(+) is required as a cofactor.

The enzyme catalyses L-methionine + ATP + H2O = S-adenosyl-L-methionine + phosphate + diphosphate. The protein operates within amino-acid biosynthesis; S-adenosyl-L-methionine biosynthesis; S-adenosyl-L-methionine from L-methionine: step 1/1. In terms of biological role, catalyzes the formation of S-adenosylmethionine from methionine and ATP. The reaction comprises two steps that are both catalyzed by the same enzyme: formation of S-adenosylmethionine (AdoMet) and triphosphate, and subsequent hydrolysis of the triphosphate. The polypeptide is S-adenosylmethionine synthase (sam1) (Schizosaccharomyces pombe (strain 972 / ATCC 24843) (Fission yeast)).